The chain runs to 492 residues: Mitochondrial distribution and morphology protein 12 (492 aa).

One can recognise an SMP-LTD domain in the interval 1 to 492 (MSIDLNWETV…VYPSFWTFLV (492 aa)). 3 disordered regions span residues 68–158 (DFYE…STPG), 199–301 (LEGH…GHPR), and 379–434 (AVGG…GSGN). Positions 78–90 (VASDDSEGEEDAV) are enriched in acidic residues. Residues 130 to 139 (SPGGPGGPGM) show a composition bias toward gly residues. The segment covering 246–257 (LNPNSLAPPSSS) has biased composition (low complexity). Residues 270 to 285 (TTPAPGSATALSGSNE) are compositionally biased toward polar residues. Residues 387–400 (GLSSPGEGPSQAQG) show a composition bias toward low complexity. A compositionally biased stretch (gly residues) spans 401-415 (QGQGQGQGQGQGQTP). The segment covering 416 to 428 (GAGQQKQQKKQAG) has biased composition (low complexity).

The protein belongs to the MDM12 family. In terms of assembly, component of the ER-mitochondria encounter structure (ERMES) or MDM complex, composed of MMM1, MDM10, MDM12 and MDM34. An MMM1 homodimer associates with one molecule of MDM12 on each side in a pairwise head-to-tail manner, and the SMP-LTD domains of MMM1 and MDM12 generate a continuous hydrophobic tunnel for phospholipid trafficking.

The protein resides in the mitochondrion outer membrane. The protein localises to the endoplasmic reticulum membrane. Component of the ERMES/MDM complex, which serves as a molecular tether to connect the endoplasmic reticulum (ER) and mitochondria. Components of this complex are involved in the control of mitochondrial shape and protein biogenesis, and function in nonvesicular lipid trafficking between the ER and mitochondria. MDM12 is required for the interaction of the ER-resident membrane protein MMM1 and the outer mitochondrial membrane-resident beta-barrel protein MDM10. The MDM12-MMM1 subcomplex functions in the major beta-barrel assembly pathway that is responsible for biogenesis of all mitochondrial outer membrane beta-barrel proteins, and acts in a late step after the SAM complex. The MDM10-MDM12-MMM1 subcomplex further acts in the TOM40-specific pathway after the action of the MDM12-MMM1 complex. Essential for establishing and maintaining the structure of mitochondria and maintenance of mtDNA nucleoids. The polypeptide is Mitochondrial distribution and morphology protein 12 (Chaetomium globosum (strain ATCC 6205 / CBS 148.51 / DSM 1962 / NBRC 6347 / NRRL 1970) (Soil fungus)).